The primary structure comprises 87 residues: DNA-directed RNA polymerase subunit omega (87 aa).

This sequence belongs to the RNA polymerase subunit omega family. The RNAP catalytic core consists of 2 alpha, 1 beta, 1 beta' and 1 omega subunit. When a sigma factor is associated with the core the holoenzyme is formed, which can initiate transcription.

The catalysed reaction is RNA(n) + a ribonucleoside 5'-triphosphate = RNA(n+1) + diphosphate. Its function is as follows. Promotes RNA polymerase assembly. Latches the N- and C-terminal regions of the beta' subunit thereby facilitating its interaction with the beta and alpha subunits. The polypeptide is DNA-directed RNA polymerase subunit omega (Leifsonia xyli subsp. xyli (strain CTCB07)).